The sequence spans 112 residues: MKKIEAIIKPFKLDEVKEALQAAGVQGLSVTEVKGFGRQKGHTELYRGAAYVVDFLPKVKIEVVLADDMVEAAVEAIVSASRTDKIGDGKIFISPVEQAIRIRTGETGEDAV.

Residue Tyr51 is modified to O-UMP-tyrosine.

The protein belongs to the P(II) protein family. As to quaternary structure, homotrimer.

P-II indirectly controls the transcription of the glutamine synthetase gene (glnA). P-II prevents NR-II-catalyzed conversion of NR-I to NR-I-phosphate, the transcriptional activator of glnA. When P-II is uridylylated to P-II-UMP, these events are reversed. When the ratio of Gln to 2-ketoglutarate decreases, P-II is uridylylated to P-II-UMP, which causes the deadenylation of glutamine synthetase, so activating the enzyme. This is Nitrogen regulatory protein P-II (glnB) from Cereibacter sphaeroides (Rhodobacter sphaeroides).